The chain runs to 484 residues: Ornithine decarboxylase (484 aa).

Lysine 114 carries the N6-(pyridoxal phosphate)lysine modification. Pyridoxal 5'-phosphate-binding positions include serine 245, glycine 282, and 315-318; that span reads EPGR. Substrate is bound at residue 381 to 382; that stretch reads FD. Cysteine 422 serves as the catalytic Proton donor; shared with dimeric partner. Aspartate 423 contacts substrate. Tyrosine 452 provides a ligand contact to pyridoxal 5'-phosphate.

It belongs to the Orn/Lys/Arg decarboxylase class-II family. In terms of assembly, homodimer. Only the dimer is catalytically active, as the active sites are constructed of residues from both monomers. Pyridoxal 5'-phosphate is required as a cofactor.

The protein resides in the cytoplasm. It carries out the reaction L-ornithine + H(+) = putrescine + CO2. Its pathway is amine and polyamine biosynthesis; putrescine biosynthesis via L-ornithine pathway; putrescine from L-ornithine: step 1/1. With respect to regulation, inhibited by antizyme (AZ) OAZ1 in response to polyamine levels. AZ inhibits the assembly of the functional homodimer by binding to ODC monomers and targeting them for ubiquitin-independent proteolytic destruction by the 26S proteasome. Its function is as follows. Catalyzes the first and rate-limiting step of polyamine biosynthesis that converts ornithine into putrescine, which is the precursor for the polyamines, spermidine and spermine. Polyamines are essential for cell proliferation and are implicated in cellular processes, ranging from DNA replication to apoptosis. The chain is Ornithine decarboxylase (spe-1) from Neurospora crassa (strain ATCC 24698 / 74-OR23-1A / CBS 708.71 / DSM 1257 / FGSC 987).